The following is an 807-amino-acid chain: Glycerol-3-phosphate acyltransferase (807 aa).

Residues 309 to 314 carry the HXXXXD motif motif; it reads CHRSHM.

Belongs to the GPAT/DAPAT family.

The protein localises to the cell inner membrane. It carries out the reaction sn-glycerol 3-phosphate + an acyl-CoA = a 1-acyl-sn-glycero-3-phosphate + CoA. It functions in the pathway phospholipid metabolism; CDP-diacylglycerol biosynthesis; CDP-diacylglycerol from sn-glycerol 3-phosphate: step 1/3. The chain is Glycerol-3-phosphate acyltransferase from Aeromonas hydrophila subsp. hydrophila (strain ATCC 7966 / DSM 30187 / BCRC 13018 / CCUG 14551 / JCM 1027 / KCTC 2358 / NCIMB 9240 / NCTC 8049).